Consider the following 228-residue polypeptide: Phosphoribosylformylglycinamidine synthase subunit PurQ (228 aa).

In terms of domain architecture, Glutamine amidotransferase type-1 spans 3 to 226 (FAVVVFPGSN…VTYWRDAHVV (224 aa)). Cysteine 86 acts as the Nucleophile in catalysis. Active-site residues include histidine 195 and glutamate 197.

In terms of assembly, part of the FGAM synthase complex composed of 1 PurL, 1 PurQ and 2 PurS subunits.

The protein localises to the cytoplasm. The enzyme catalyses N(2)-formyl-N(1)-(5-phospho-beta-D-ribosyl)glycinamide + L-glutamine + ATP + H2O = 2-formamido-N(1)-(5-O-phospho-beta-D-ribosyl)acetamidine + L-glutamate + ADP + phosphate + H(+). It catalyses the reaction L-glutamine + H2O = L-glutamate + NH4(+). The protein operates within purine metabolism; IMP biosynthesis via de novo pathway; 5-amino-1-(5-phospho-D-ribosyl)imidazole from N(2)-formyl-N(1)-(5-phospho-D-ribosyl)glycinamide: step 1/2. In terms of biological role, part of the phosphoribosylformylglycinamidine synthase complex involved in the purines biosynthetic pathway. Catalyzes the ATP-dependent conversion of formylglycinamide ribonucleotide (FGAR) and glutamine to yield formylglycinamidine ribonucleotide (FGAM) and glutamate. The FGAM synthase complex is composed of three subunits. PurQ produces an ammonia molecule by converting glutamine to glutamate. PurL transfers the ammonia molecule to FGAR to form FGAM in an ATP-dependent manner. PurS interacts with PurQ and PurL and is thought to assist in the transfer of the ammonia molecule from PurQ to PurL. This Anoxybacillus flavithermus (strain DSM 21510 / WK1) protein is Phosphoribosylformylglycinamidine synthase subunit PurQ.